The primary structure comprises 277 residues: 3-methyl-2-oxobutanoate hydroxymethyltransferase (277 aa).

2 residues coordinate Mg(2+): Asp43 and Asp82. Residues 43-44, Asp82, and Lys112 each bind 3-methyl-2-oxobutanoate; that span reads DS. Residue Glu114 participates in Mg(2+) binding. Glu181 functions as the Proton acceptor in the catalytic mechanism.

The protein belongs to the PanB family. In terms of assembly, homodecamer; pentamer of dimers. Mg(2+) serves as cofactor.

It localises to the cytoplasm. The enzyme catalyses 3-methyl-2-oxobutanoate + (6R)-5,10-methylene-5,6,7,8-tetrahydrofolate + H2O = 2-dehydropantoate + (6S)-5,6,7,8-tetrahydrofolate. Its pathway is cofactor biosynthesis; (R)-pantothenate biosynthesis; (R)-pantoate from 3-methyl-2-oxobutanoate: step 1/2. Its function is as follows. Catalyzes the reversible reaction in which hydroxymethyl group from 5,10-methylenetetrahydrofolate is transferred onto alpha-ketoisovalerate to form ketopantoate. This chain is 3-methyl-2-oxobutanoate hydroxymethyltransferase, found in Bacillus licheniformis (strain ATCC 14580 / DSM 13 / JCM 2505 / CCUG 7422 / NBRC 12200 / NCIMB 9375 / NCTC 10341 / NRRL NRS-1264 / Gibson 46).